The primary structure comprises 63 residues: Large ribosomal subunit protein uL29 (63 aa).

This sequence belongs to the universal ribosomal protein uL29 family.

This is Large ribosomal subunit protein uL29 from Shewanella frigidimarina (strain NCIMB 400).